We begin with the raw amino-acid sequence, 270 residues long: Phosphatidylglycerol--prolipoprotein diacylglyceryl transferase (270 aa).

The next 7 helical transmembrane spans lie at Leu-17–Gly-37, Met-59–Tyr-79, Trp-95–Phe-115, Phe-129–Gly-149, Pro-175–Phe-195, Met-202–Phe-222, and Leu-237–Trp-257. Residue Arg-142 coordinates a 1,2-diacyl-sn-glycero-3-phospho-(1'-sn-glycerol).

Belongs to the Lgt family.

It localises to the cell inner membrane. The catalysed reaction is L-cysteinyl-[prolipoprotein] + a 1,2-diacyl-sn-glycero-3-phospho-(1'-sn-glycerol) = an S-1,2-diacyl-sn-glyceryl-L-cysteinyl-[prolipoprotein] + sn-glycerol 1-phosphate + H(+). The protein operates within protein modification; lipoprotein biosynthesis (diacylglyceryl transfer). Functionally, catalyzes the transfer of the diacylglyceryl group from phosphatidylglycerol to the sulfhydryl group of the N-terminal cysteine of a prolipoprotein, the first step in the formation of mature lipoproteins. This Cupriavidus metallidurans (strain ATCC 43123 / DSM 2839 / NBRC 102507 / CH34) (Ralstonia metallidurans) protein is Phosphatidylglycerol--prolipoprotein diacylglyceryl transferase.